We begin with the raw amino-acid sequence, 123 residues long: SGSCEVKTCWVAQPDFRSIGDHLKDKYDSASEMVVEKHKEARGWVETLRPKYPLFKPPTDRDLIYYERSPNFCDPNSETGSFGTKDRVCNLTSHGIDGCDLLCCGRGHNTRTEKRKDKCHCVF.

A lipid anchor (O-palmitoleoyl serine; by PORCN) is attached at Ser-1. A disulfide bridge connects residues Cys-89 and Cys-104. Asn-90 carries N-linked (GlcNAc...) asparagine glycosylation.

The protein belongs to the Wnt family. In terms of processing, palmitoleoylation is required for efficient binding to frizzled receptors. Depalmitoleoylation leads to Wnt signaling pathway inhibition.

The protein localises to the secreted. Its subcellular location is the extracellular space. It is found in the extracellular matrix. Functionally, ligand for members of the frizzled family of seven transmembrane receptors. Functions in the canonical Wnt signaling pathway that results in activation of transcription factors of the TCF/LEF family. Required for normal embryonic development. This chain is Protein Wnt-3 (WNT-3), found in Eptatretus stoutii (Pacific hagfish).